The following is a 186-amino-acid chain: UPF0397 protein lp_0150 (186 aa).

A run of 5 helical transmembrane segments spans residues 12 to 32 (VVATGIGAAVIFVLMKFVAIP), 45 to 65 (GFLALLGAIFGPVAAGLAVFI), 76 to 96 (GSPWWTWVIVDGLIGVAFGLA), 112 to 132 (LVWFNIYQIIVNFIGWVLLAP), and 151 to 171 (VITWIADSISVAIIGTILLVL).

It belongs to the UPF0397 family.

Its subcellular location is the cell membrane. The chain is UPF0397 protein lp_0150 from Lactiplantibacillus plantarum (strain ATCC BAA-793 / NCIMB 8826 / WCFS1) (Lactobacillus plantarum).